The following is a 152-amino-acid chain: Xanthine-guanine phosphoribosyltransferase (152 aa).

Residues 37 to 38 (RG) and 88 to 96 (DDLVDTGNT) contribute to the 5-phospho-alpha-D-ribose 1-diphosphate site. Aspartate 89 contacts Mg(2+). Residues aspartate 92 and isoleucine 135 each contribute to the guanine site. Residues aspartate 92 and isoleucine 135 each coordinate xanthine. GMP contacts are provided by residues 92-96 (DTGNT) and 134-135 (WI).

The protein belongs to the purine/pyrimidine phosphoribosyltransferase family. XGPT subfamily. In terms of assembly, homotetramer. Mg(2+) is required as a cofactor.

The protein resides in the cell inner membrane. It catalyses the reaction GMP + diphosphate = guanine + 5-phospho-alpha-D-ribose 1-diphosphate. The catalysed reaction is XMP + diphosphate = xanthine + 5-phospho-alpha-D-ribose 1-diphosphate. The enzyme catalyses IMP + diphosphate = hypoxanthine + 5-phospho-alpha-D-ribose 1-diphosphate. It functions in the pathway purine metabolism; GMP biosynthesis via salvage pathway; GMP from guanine: step 1/1. It participates in purine metabolism; XMP biosynthesis via salvage pathway; XMP from xanthine: step 1/1. Functionally, purine salvage pathway enzyme that catalyzes the transfer of the ribosyl-5-phosphate group from 5-phospho-alpha-D-ribose 1-diphosphate (PRPP) to the N9 position of the 6-oxopurines guanine and xanthine to form the corresponding ribonucleotides GMP (guanosine 5'-monophosphate) and XMP (xanthosine 5'-monophosphate), with the release of PPi. To a lesser extent, also acts on hypoxanthine. In Mannheimia succiniciproducens (strain KCTC 0769BP / MBEL55E), this protein is Xanthine-guanine phosphoribosyltransferase.